The primary structure comprises 316 residues: Secondary metabolism regulator laeA (316 aa).

It belongs to the methyltransferase superfamily. LaeA methyltransferase family. As to quaternary structure, component of the heterotrimeric velvet complex composed of laeA, veA and velB; VeA acting as a bridging protein between laeA and velB.

It localises to the nucleus. The catalysed reaction is L-methionyl-[protein] + S-adenosyl-L-methionine = S-methyl-L-methionyl-[protein] + S-adenosyl-L-homocysteine. Methyltransferase that performs automethylation. No other methyl-accepting substrate has been identified yet. Component of the velvet transcription factor complex that acts as a global regulator for secondary metabolite gene expression. Controls the biosynthetic gene cluster for beauvericin, a depsipeptide mycotoxin that functions as a virulence determinant. The velvet complex also regulates chromatin structure and transcription of siderophore biosynthetic genes and is required for infection of tomato plants. The velvet complex also governs expression of nitrate metabolism genes. This chain is Secondary metabolism regulator laeA, found in Fusarium oxysporum f. sp. lycopersici (strain 4287 / CBS 123668 / FGSC 9935 / NRRL 34936) (Fusarium vascular wilt of tomato).